A 318-amino-acid chain; its full sequence is MRNRKMKVIFFGTPLFAAQVLEFLLQNQVEVVAVISKPDRPKGRSSIPVPTPVKLIAQSYHLPLYQPEVVSSLDFAPVLKNYEADLFVVVAYGEIIKQHLLDMPKRACINLHASLLPKYRGAAPIQRSIIEGEKETGVTIMHMVKKMDAGDMIKKVSVQITSEMTYGELEQALCQIGKHALLEVIKQFDRGEPSRQIQDSHLATFAPKIELEDCELDWNQSAQHLHDLVRGVNPYPGAWCYVKVNGEQKRLKISRTRVIPYPSNCPGTILDSSKGNLKILTGDQALELVEVQLEGKKTMTSEQWIRGMSKNQLKFLVN.

A (6S)-5,6,7,8-tetrahydrofolate-binding site is contributed by 114-117 (SLLP).

This sequence belongs to the Fmt family.

The enzyme catalyses L-methionyl-tRNA(fMet) + (6R)-10-formyltetrahydrofolate = N-formyl-L-methionyl-tRNA(fMet) + (6S)-5,6,7,8-tetrahydrofolate + H(+). Attaches a formyl group to the free amino group of methionyl-tRNA(fMet). The formyl group appears to play a dual role in the initiator identity of N-formylmethionyl-tRNA by promoting its recognition by IF2 and preventing the misappropriation of this tRNA by the elongation apparatus. The protein is Methionyl-tRNA formyltransferase of Protochlamydia amoebophila (strain UWE25).